A 364-amino-acid chain; its full sequence is Dihydroorotate dehydrogenase (quinone) (364 aa).

FMN-binding positions include 61 to 65 and Thr-85; that span reads AGYDK. Lys-65 serves as a coordination point for substrate. 110–114 is a substrate binding site; it reads NRLGF. FMN contacts are provided by Asn-139 and Asn-170. Residue Asn-170 participates in substrate binding. The active-site Nucleophile is Ser-173. Asn-175 is a binding site for substrate. FMN-binding residues include Lys-215 and Ser-243. Residue 244–245 coordinates substrate; sequence NT. Residues Gly-266, Gly-295, and 316–317 contribute to the FMN site; that span reads YT.

The protein belongs to the dihydroorotate dehydrogenase family. Type 2 subfamily. In terms of assembly, monomer. FMN serves as cofactor.

It is found in the cell membrane. It carries out the reaction (S)-dihydroorotate + a quinone = orotate + a quinol. The protein operates within pyrimidine metabolism; UMP biosynthesis via de novo pathway; orotate from (S)-dihydroorotate (quinone route): step 1/1. In terms of biological role, catalyzes the conversion of dihydroorotate to orotate with quinone as electron acceptor. This is Dihydroorotate dehydrogenase (quinone) from Brucella abortus (strain S19).